Consider the following 193-residue polypeptide: Ubiquitin-conjugating enzyme E2 E1 (193 aa).

The interval 1–45 (MSDDDSRASTSSSSSSSSNQQTEKEGSTPKKKESKVSMSKNSKLL) is disordered. Ser2 is modified (N-acetylserine). Positions 8 to 18 (ASTSSSSSSSS) are enriched in low complexity. Residues 22 to 35 (TEKEGSTPKKKESK) are compositionally biased toward basic and acidic residues. The span at 36–45 (VSMSKNSKLL) shows a compositional bias: polar residues. Residues 47–193 (TSAKRIQKEL…ARQWTKRYAT (147 aa)) enclose the UBC core domain. Residue Cys131 is the Glycyl thioester intermediate of the active site. Lys136 is covalently cross-linked (Glycyl lysine isopeptide (Lys-Gly) (interchain with G-Cter in ISG15)).

The protein belongs to the ubiquitin-conjugating enzyme family. As to quaternary structure, interacts with RNF14. Post-translationally, ISGylation suppresses ubiquitin E2 enzyme activity. In terms of processing, autoubiquitinated.

The protein resides in the nucleus. It carries out the reaction S-ubiquitinyl-[E1 ubiquitin-activating enzyme]-L-cysteine + [E2 ubiquitin-conjugating enzyme]-L-cysteine = [E1 ubiquitin-activating enzyme]-L-cysteine + S-ubiquitinyl-[E2 ubiquitin-conjugating enzyme]-L-cysteine.. The catalysed reaction is S-ubiquitinyl-[E1 ubiquitin-activating enzyme]-L-cysteine + [acceptor protein]-L-lysine = [E1 ubiquitin-activating enzyme]-L-cysteine + N(6)-monoubiquitinyl-[acceptor protein]-L-lysine.. It functions in the pathway protein modification; protein ubiquitination. Accepts ubiquitin from the E1 complex and catalyzes its covalent attachment to other proteins. Catalyzes the covalent attachment of ISG15 to other proteins. Mediates the selective degradation of short-lived and abnormal proteins. In vitro also catalyzes 'Lys-48'-linked polyubiquitination. The protein is Ubiquitin-conjugating enzyme E2 E1 (Ube2e1) of Mus musculus (Mouse).